The sequence spans 321 residues: MESNGVPMITLSSGIRMPALGMGTAETMVKGTEREKLAFLKAIEVGYRHFDTAAAYQSEECLGEAIAEALQLGLIKSRDELFITSKLWCADAHADLVLPALQNSLRNLKLEYLDLYLIHHPVSLKPGKFVNEIPKDHILPMDYKTVWAAMEECQTLGFTRAIGVSNFSCKKLQELMAAAKIPPVVNQVEMSPTLHQKNLREYCKANNIMITAHSVLGAIGAPWGSNAVMDSKVLHQIAVARGKSVAQVSMRWVYQQGASLVVKSFNEGRMKENLKIFDWELTAEDMEKISEIPQSRTSSADFLLSPTGPFKTEEEFWDEKD.

Threonine 27 and aspartate 51 together coordinate NADPH. Active-site proton donor residues include tyrosine 56 and histidine 119. Substrate is bound at residue histidine 119. Residues serine 165, glutamine 187, serine 214, leucine 216, serine 264, and arginine 269 each contribute to the NADPH site. The tract at residues 299–321 (SADFLLSPTGPFKTEEEFWDEKD) is disordered.

This sequence belongs to the aldo/keto reductase family. In terms of tissue distribution, latex secreting cells (laticifer cells). Expressed constitutively in all organs with highest levels in capsules. Restricted to the parietal region of sieve elements adjacent or proximal to laticifers in roots, stems, leaves and carpels.

The protein resides in the cytoplasm. Its subcellular location is the cytosol. It catalyses the reaction codeine + NADP(+) = codeinone + NADPH + H(+). The catalysed reaction is neopine + NADP(+) = neopinone + NADPH + H(+). The enzyme catalyses morphine + NADP(+) = morphinone + NADPH + H(+). It carries out the reaction neomorphine + NADP(+) = neomorphinone + NADPH + H(+). It participates in alkaloid biosynthesis; morphine biosynthesis. Its function is as follows. NADPH-dependent codeinone reductase involved in biosynthesis of morphinan-type benzylisoquinoline and opiate alkaloids natural products. Reduces codeinone to codeine in the penultimate step in morphine biosynthesis. Can use morphinone, hydrocodone and hydromorphone as substrate during reductive reaction with NADPH as cofactor, and morphine and dihydrocodeine as substrate during oxidative reaction with NADP as cofactor. Converts morphinone to morphine, and neomorphinone to neomorphine. Reduces irreversibly neopinone, a spontaneous isomer of codeinone, to neopine; in planta, neopine levels are limited to low levels. This Papaver somniferum (Opium poppy) protein is NADPH-dependent codeinone reductase 1-4.